The following is a 1756-amino-acid chain: Multifunctional conjugation protein TraI (1756 aa).

A DNA relaxase region spans residues 1–330; the sequence is MLSFSVVKSA…TQAIAGLSER (330 aa). Tyrosine 16 serves as the catalytic O-(5'-phospho-DNA)-tyrosine intermediate; for relaxase activity. Tyrosine 17 (relaxase) is an active-site residue. Mg(2+) contacts are provided by histidine 146, histidine 157, and histidine 159. Residues 950-1500 form a DNA helicase I region; the sequence is GKEAVTPLME…LRDVAAGRAV (551 aa). 992-999 contributes to the ATP binding site; sequence GYAGVGKT. Residues 1719 to 1753 adopt a coiled-coil conformation; the sequence is EQEAVREVARENLLQERLQQIERDMVRDLQKEKTL.

The protein to TraI of plasmid F. In terms of assembly, monomer. Part of the relaxosome, a complex composed of plasmid-encodes TraI, TraM, TraY and host-encoded IHF bound to the F plasmid origin of transfer (oriT). Directly contacts coupling protein TraD. Seems to directly contact TraM via its C-terminus. The cofactor is Mg(2+).

Its subcellular location is the cytoplasm. The enzyme catalyses ATP-independent breakage of single-stranded DNA, followed by passage and rejoining.. It carries out the reaction ATP + H2O = ADP + phosphate + H(+). Its function is as follows. Conjugative DNA transfer (CDT) is the unidirectional transfer of ssDNA plasmid from a donor to a recipient cell. It is the central mechanism by which antibiotic resistance and virulence factors are propagated in bacterial populations. Part of the relaxosome, which facilitates a site- and strand-specific cut in the origin of transfer by TraI, at the nic site. Relaxosome formation requires binding of IHF and TraY to the oriT region, which then facilitates binding of TraI relaxase. TraI forms a covalent 5'-phosphotyrosine intermediate linkage to the ssDNA. The transesterified T-strand moves from the donor cell to the recipient cell in a 5'to 3' direction, with the DNA helicase activity of TraI unwinding the DNA. DNA transfer occurs via the conjugative pore (transferosome) an intercellular junction mediated by a type IV secretion system, with TraD providing the means to link the relaxosome to the conjugative pore. The relaxase completes DNA transfer by reversing the covalent phosphotyrosine linkage and releasing the T-strand. Functionally, traI has also been identified as DNA helicase I. DNA. helicase I is a potent, highly processive DNA-dependent ATPase, able to unwind about 1.1 kb dsDNA per second in a 5' to 3' manner. The protein is Multifunctional conjugation protein TraI (traI) of Escherichia coli.